A 553-amino-acid polypeptide reads, in one-letter code: Solute carrier family 22 member 12 (553 aa).

Residues 10–30 form a helical membrane-spanning segment; the sequence is VGGLGRFQLFQTVALVTPILW. Asn-56 carries an N-linked (GlcNAc...) asparagine glycan. Transmembrane regions (helical) follow at residues 146 to 166, 182 to 202, 204 to 224, 232 to 252, 260 to 280, 351 to 371, 378 to 398, 412 to 432, 435 to 455, 466 to 486, and 495 to 515; these read PMAQSIFLAGILVGAAVCGHA, LVSVSGTAAAFMPTFPLYCLF, FLLASAVAGVMMNTASLLMEW, LVMTLNALGFSFGQVLTGSVA, MLQLAVSAPFFLFFVYSWWLP, IISMLCWFAFGFTFYGLALDL, IFLLQALIGIVDFPVKTGSLL, FLVLPGLCILSNILVPHGMGV, SALAVLGLGCLGGAFTCITIF, MTAVGLCQVAARGGAMLGPLV, and WMPLLVYGVVPVLSGLAALLL. Ser-534 carries the post-translational modification Phosphoserine. Phosphothreonine is present on Thr-542.

Belongs to the major facilitator (TC 2.A.1) superfamily. Organic cation transporter (TC 2.A.1.19) family. As to quaternary structure, interacts with PDZK1. In terms of processing, N-glycosylated. In terms of tissue distribution, detected in kidney (at protein level). Detected in kidney cortex, in proximal tubules.

It localises to the apical cell membrane. The enzyme catalyses urate(out) + (S)-lactate(in) = urate(in) + (S)-lactate(out). It catalyses the reaction nicotinate(in) + urate(out) = nicotinate(out) + urate(in). The catalysed reaction is urate(out) + n chloride(in) = urate(in) + n chloride(out). It carries out the reaction orotate(out) + nicotinate(in) = orotate(in) + nicotinate(out). Electroneutral antiporter that translocates urate across the apical membrane of proximal tubular cells in exchange for monovalent organic or inorganic anions. Involved in renal reabsorption of urate and helps maintaining blood levels of uric acid. Mediates urate uptake by an exchange with organic anions such as (S)-lactate and nicotinate, and inorganic anion Cl(-). Other inorganic anions such as Br(-), I(-) and NO3(-) may also act as counteranions that exchange for urate. Also mediates orotate tubular uptake coupled with nicotinate efflux and to a lesser extent with lactate efflux, therefore displaying a potential role in orotate renal reabsorption. Orotate transport is Cl(-)-dependent. The protein is Solute carrier family 22 member 12 of Mus musculus (Mouse).